A 130-amino-acid polypeptide reads, in one-letter code: Ribosome-binding factor A (130 aa).

This sequence belongs to the RbfA family. Monomer. Binds 30S ribosomal subunits, but not 50S ribosomal subunits or 70S ribosomes.

The protein resides in the cytoplasm. In terms of biological role, one of several proteins that assist in the late maturation steps of the functional core of the 30S ribosomal subunit. Associates with free 30S ribosomal subunits (but not with 30S subunits that are part of 70S ribosomes or polysomes). Required for efficient processing of 16S rRNA. May interact with the 5'-terminal helix region of 16S rRNA. This chain is Ribosome-binding factor A, found in Roseiflexus castenholzii (strain DSM 13941 / HLO8).